The following is a 483-amino-acid chain: Probable serine incorporator (483 aa).

11 helical membrane passes run 43–63, 109–129, 146–166, 169–189, 218–238, 249–269, 274–294, 295–315, 338–358, 414–434, and 457–477; these read STRI…WIML, IMFS…GVSS, LILL…FFIG, WSWI…ILLV, ISAT…MFHF, FFIG…MLPS, LPSS…YLVW, SAVS…PLFL, AGTN…SVAY, YSWS…MMVL, and VVSS…PVCL.

It belongs to the TDE1 family.

It localises to the endoplasmic reticulum membrane. In terms of biological role, enhances the incorporation of serine into phosphatidylserine and sphingolipids. This is Probable serine incorporator (serinc) from Monosiga brevicollis (Choanoflagellate).